The primary structure comprises 277 residues: C2H2-type zinc-finger transcription factor (277 aa).

2 disordered regions span residues 23-66 (PTMN…AHPP) and 78-146 (MNEP…TDSI). Residues 27–37 (EIETTDNTYPR) are compositionally biased toward polar residues. The C2H2-type; degenerate zinc finger occupies 185 to 208 (HPCPDCGRVFTRSTARNFHRQSGT).

This sequence belongs to the GLI C2H2-type zinc-finger protein family.

Its subcellular location is the nucleus. In terms of biological role, C2H2-type zinc-finger transcription factor that controls the expression of the nonribosomal peptide synthases inpA and inpB, as well as of the other inp cluster-associated genes. Also mediates the expression of the asperfuranone biosynthesis gene cluster by binding to the afoA promoter. Probably recognizes the 5'-CT/C/AAAAGGAT/AT/GG/CA-3' motif in the promoters of teget genes. The chain is C2H2-type zinc-finger transcription factor from Emericella nidulans (strain FGSC A4 / ATCC 38163 / CBS 112.46 / NRRL 194 / M139) (Aspergillus nidulans).